The sequence spans 585 residues: Probable G-protein coupled receptor Mth-like 10 (585 aa).

A signal peptide spans 1–32; it reads MPKKIHQPGGSLYCGVTLLGVLCLVVFRLIPG. The Extracellular portion of the chain corresponds to 33-250; that stretch reads IPFGTYVMAE…DHSTVKIINS (218 aa). Cystine bridges form between cysteine 56–cysteine 110, cysteine 112–cysteine 117, cysteine 121–cysteine 216, cysteine 122–cysteine 135, and cysteine 177–cysteine 236. Asparagine 63 and asparagine 72 each carry an N-linked (GlcNAc...) asparagine glycan. Asparagine 142, asparagine 152, asparagine 157, asparagine 198, and asparagine 223 each carry an N-linked (GlcNAc...) asparagine glycan. The chain crosses the membrane as a helical span at residues 251 to 271; it reads YAMMFSIPFMMLTIAVYLLIP. Over 272–280 the chain is Cytoplasmic; that stretch reads ELRNQHGKS. The chain crosses the membrane as a helical span at residues 281–301; that stretch reads LVCYLIGLSVGYSSLCYVQLY. Topologically, residues 302–312 are extracellular; sequence QVDATGVTCKV. The chain crosses the membrane as a helical span at residues 313-333; it reads FGYTAYFFFMGAYMWLSVISF. Residues 334–353 lie on the Cytoplasmic side of the membrane; the sequence is DLWHNFRGTRGINRFQEKKR. Residues 354-374 traverse the membrane as a helical segment; the sequence is FLFYSLYSWGIALVFLAFTYC. The Extracellular segment spans residues 375–404; it reads AQQLTNLPANLKPGIGDGVYCWLDMSNWAA. Residues 405 to 425 form a helical membrane-spanning segment; that stretch reads MIYFYGPILAIVVANTIMFIM. Residues 426-466 are Cytoplasmic-facing; sequence TAIKIHGVQREMARIIASENSTKNLRTEKDKRFYRAWSNYR. Residues 467–487 traverse the membrane as a helical segment; it reads FGLFLRLFLIMGITWLTELIS. Over 488–498 the chain is Extracellular; it reads YFVGSDKGWSK. A helical transmembrane segment spans residues 499–519; sequence LFYISDLANAMQGFLIFMLFV. The Cytoplasmic portion of the chain corresponds to 520-585; that stretch reads MKKKVKHLIT…VDPQKTTIFR (66 aa).

It belongs to the G-protein coupled receptor 2 family. Mth subfamily.

It is found in the cell membrane. The protein is Probable G-protein coupled receptor Mth-like 10 (mthl10) of Drosophila melanogaster (Fruit fly).